A 299-amino-acid chain; its full sequence is Peroxisomal biogenesis factor 19 (299 aa).

Residues 1-63 form a disordered region; it reads MAAAEEGCSV…SPGDTAKDAL (63 aa). Ala-2 carries the post-translational modification N-acetylalanine. The docking to the peroxisome membrane and binding to PEX3 stretch occupies residues 2-56; it reads AAAEEGCSVGAEADRELEELLESALDDFDKAKPSPAPPSTTTAPDASGPQKRSPG. Positions 2 to 91 are necessary for PEX19 function on peroxisome biogenesis; sequence AAAEEGCSVG…QATAEFEKAM (90 aa). The span at 16–27 shows a compositional bias: acidic residues; it reads RELEELLESALD. Residues Ser-35, Ser-54, and Ser-66 each carry the phosphoserine modification. Thr-236 carries the phosphothreonine modification. A Cysteine methyl ester modification is found at Cys-296. The S-farnesyl cysteine moiety is linked to residue Cys-296. Positions 297 to 299 are cleaved as a propeptide — removed in mature form; that stretch reads LIM.

The protein belongs to the peroxin-19 family. Interacts with a broad range of peroxisomal membrane proteins, including PEX3, PEX10, PEX11A, PEX11B, PEX12, PEX13, PEX14 and PEX16, PXMP2/PMP22, PXMP4/PMP24, SLC25A17/PMP34, ABCD1/ALDP, ABCD2/ALDRP, and ABCD3/PMP70. Also interacts with the tumor suppressor CDKN2A/p19ARF. In terms of assembly, (Microbial infection) Interacts with human cytomegalovirus protein UL37 isoform vMIA; this interaction inhibits the peroxisomal-dependent antiviral signaling. Ubiquitously expressed. Isoform 1 is strongly predominant in all tissues except in utero where isoform 2 is the main form.

The protein resides in the cytoplasm. It is found in the peroxisome membrane. Functionally, necessary for early peroxisomal biogenesis. Acts both as a cytosolic chaperone and as an import receptor for peroxisomal membrane proteins (PMPs). Binds and stabilizes newly synthesized PMPs in the cytoplasm by interacting with their hydrophobic membrane-spanning domains, and targets them to the peroxisome membrane by binding to the integral membrane protein PEX3. Excludes CDKN2A from the nucleus and prevents its interaction with MDM2, which results in active degradation of TP53. The chain is Peroxisomal biogenesis factor 19 from Homo sapiens (Human).